The primary structure comprises 178 residues: Protein Vhl (178 aa).

Belongs to the VHL family. In terms of assembly, part of a complex with Cul2, Roc1a/Rbx1 and the elongin BC complex. Interacts with sima/Hif1a. Interacts with itself. Interacts with mgr and betaTub56D/tubulin beta-1 chain. Interacts with tubulin alpha-beta heterodimers by itself or in complex with mgr. Interacts with microtubules (MTs).

The protein operates within protein modification; protein ubiquitination. Functionally, involved in development of tracheal vasculature. Probably involved in halting cell migration at the end of vascular tube outgrowth. Possesses E3 ubiquitin ligase activity when in complex with Elongin BC complex, Cul2 and Rox1a/Rbx1, and can target sima/Hif1a for ubiquitination. May play a critical role in promoting microtubule stabilization when tubulins are correctly folded by the prefoldin complex. If tubulin is incorrectly folded, may promote its degradation. This chain is Protein Vhl, found in Drosophila melanogaster (Fruit fly).